The following is a 254-amino-acid chain: Phosphomannomutase (254 aa).

D16 acts as the Nucleophile in catalysis. Mg(2+)-binding residues include D16 and D18. Catalysis depends on D18, which acts as the Proton donor/acceptor. Residues R25, R129, R140, R147, S185, and D187 each contribute to the alpha-D-mannose 1-phosphate site. D216, Y228, D230, and T233 together coordinate Mg(2+).

This sequence belongs to the eukaryotic PMM family. Homodimer.

It is found in the cytoplasm. The enzyme catalyses alpha-D-mannose 1-phosphate = D-mannose 6-phosphate. The protein operates within nucleotide-sugar biosynthesis; GDP-alpha-D-mannose biosynthesis; alpha-D-mannose 1-phosphate from D-fructose 6-phosphate: step 2/2. In terms of biological role, involved in the synthesis of the GDP-mannose and dolichol-phosphate-mannose required for a number of critical mannosyl transfer reactions. Required for maintaining N-linked glycoprotein glycosylation at the neuromuscular junction (NMJ) synaptomatrix, and thus acts in multiple pathways that prevent NMJ structural overgrowth, restrict synaptic bouton differentiation, and limit NMJ neurotransmission strength, in order to maintain viability, coordinate movement, and in adults ensure correct wing positioning. Acts in the NMJ trans-synaptic Wg pathway via glycosylation of synaptic Mmp2 which enables dlp/wg signaling during development. This Drosophila melanogaster (Fruit fly) protein is Phosphomannomutase.